We begin with the raw amino-acid sequence, 215 residues long: Chaperone protein TorD (215 aa).

Belongs to the TorD/DmsD family. TorD subfamily.

The protein resides in the cytoplasm. In terms of biological role, involved in the biogenesis of TorA. Acts on TorA before the insertion of the molybdenum cofactor and, as a result, probably favors a conformation of the apoenzyme that is competent for acquiring the cofactor. This Vibrio parahaemolyticus serotype O3:K6 (strain RIMD 2210633) protein is Chaperone protein TorD.